The following is a 328-amino-acid chain: Malate dehydrogenase (328 aa).

11–17 (GAAGQIG) contacts NAD(+). Substrate is bound by residues Arg-94 and Arg-100. Residues Asn-107, Gln-114, and 131–133 (VGN) contribute to the NAD(+) site. Substrate-binding residues include Asn-133 and Arg-164. The active-site Proton acceptor is the His-189.

Belongs to the LDH/MDH superfamily. MDH type 2 family.

It catalyses the reaction (S)-malate + NAD(+) = oxaloacetate + NADH + H(+). Catalyzes the reversible oxidation of malate to oxaloacetate. This chain is Malate dehydrogenase, found in Xanthomonas oryzae pv. oryzae (strain PXO99A).